We begin with the raw amino-acid sequence, 196 residues long: Venom platylysin (196 aa).

The protein belongs to the redulysin-like family. In terms of tissue distribution, expressed by the venom gland.

It localises to the secreted. In terms of biological role, probable insecticidal toxin that has been detected in a semi-pure insecticidal fraction. The polypeptide is Venom platylysin (Platymeris biguttatus (Two-spotted assassin bug)).